Reading from the N-terminus, the 299-residue chain is ATP phosphoribosyltransferase (299 aa).

It belongs to the ATP phosphoribosyltransferase family. Long subfamily. In terms of assembly, equilibrium between an active dimeric form, an inactive hexameric form and higher aggregates. Interconversion between the various forms is largely reversible and is influenced by the natural substrates and inhibitors of the enzyme. Mg(2+) is required as a cofactor.

It localises to the cytoplasm. The enzyme catalyses 1-(5-phospho-beta-D-ribosyl)-ATP + diphosphate = 5-phospho-alpha-D-ribose 1-diphosphate + ATP. It functions in the pathway amino-acid biosynthesis; L-histidine biosynthesis; L-histidine from 5-phospho-alpha-D-ribose 1-diphosphate: step 1/9. Feedback inhibited by histidine. Catalyzes the condensation of ATP and 5-phosphoribose 1-diphosphate to form N'-(5'-phosphoribosyl)-ATP (PR-ATP). Has a crucial role in the pathway because the rate of histidine biosynthesis seems to be controlled primarily by regulation of HisG enzymatic activity. The chain is ATP phosphoribosyltransferase from Shigella dysenteriae serotype 1 (strain Sd197).